The chain runs to 839 residues: DNA-directed RNA polymerase YonO (839 aa).

3 residues coordinate Mg(2+): Asp535, Asp537, and Asp539.

The protein belongs to the YRH RNA polymerase family. A divalent metal cation is required as a cofactor.

It catalyses the reaction RNA(n) + a ribonucleoside 5'-triphosphate = RNA(n+1) + diphosphate. In terms of biological role, a single subunit DNA-dependent RNA polymerase (RNAP) that catalyzes the transcription of DNA into RNA using the four ribonucleoside triphosphates (rNTPs) as substrates. The enzyme is more highly processive than the multisubunit RNAP from E.coli but is considerably more error-prone. It has no detectable proof-reading function but can perform pyrophosphorolysis. Probably transcribes the late genes of the SPbeta phage starting from yonK. In Bacillus pumilus (Bacillus mesentericus), this protein is DNA-directed RNA polymerase YonO (yonO).